A 169-amino-acid polypeptide reads, in one-letter code: Putative phosphoesterase SH1944 (169 aa).

His-34 (proton donor) is an active-site residue. 2 short sequence motifs (HXTX) span residues His-34–Ile-37 and His-115–Ile-118. His-115 functions as the Proton acceptor in the catalytic mechanism.

Belongs to the 2H phosphoesterase superfamily. YjcG family.

This is Putative phosphoesterase SH1944 from Staphylococcus haemolyticus (strain JCSC1435).